The following is a 131-amino-acid chain: Phosphoribosyl-AMP cyclohydrolase (131 aa).

D82 is a binding site for Mg(2+). C83 provides a ligand contact to Zn(2+). Mg(2+) contacts are provided by D84 and D86. The Zn(2+) site is built by C99 and C106.

This sequence belongs to the PRA-CH family. Homodimer. Requires Mg(2+) as cofactor. It depends on Zn(2+) as a cofactor.

It is found in the cytoplasm. It carries out the reaction 1-(5-phospho-beta-D-ribosyl)-5'-AMP + H2O = 1-(5-phospho-beta-D-ribosyl)-5-[(5-phospho-beta-D-ribosylamino)methylideneamino]imidazole-4-carboxamide. It participates in amino-acid biosynthesis; L-histidine biosynthesis; L-histidine from 5-phospho-alpha-D-ribose 1-diphosphate: step 3/9. Catalyzes the hydrolysis of the adenine ring of phosphoribosyl-AMP. In Methanospirillum hungatei JF-1 (strain ATCC 27890 / DSM 864 / NBRC 100397 / JF-1), this protein is Phosphoribosyl-AMP cyclohydrolase.